The chain runs to 223 residues: Thymine-DNA glycosylase (223 aa).

4 residues coordinate [4Fe-4S] cluster: Cys-201, Cys-208, Cys-211, and Cys-217.

This sequence belongs to the Nth/MutY family. [4Fe-4S] cluster is required as a cofactor.

The catalysed reaction is Hydrolyzes mismatched double-stranded DNA and polynucleotides, releasing free thymine.. With respect to regulation, thymine cleavage is completely inhibited by Ni(2+), Co(2+), Zn(2+), Cu(2+) and Mn(2+). Activity is not affected by Mg(2+) and Ca(2+). Its function is as follows. DNA glycosylase that excises thymine from T/G mismatches. Also has a weak DNA glycosylase activity on uracil paired with various bases. The protein is Thymine-DNA glycosylase of Aeropyrum pernix (strain ATCC 700893 / DSM 11879 / JCM 9820 / NBRC 100138 / K1).